Consider the following 945-residue polypeptide: Isoleucine--tRNA ligase (945 aa).

The 'HIGH' region signature appears at 66–76; the sequence is PYANGDIHLGH. Glu-581 contributes to the L-isoleucyl-5'-AMP binding site. A 'KMSKS' region motif is present at residues 622–626; that stretch reads KMSKS. Residue Lys-625 participates in ATP binding. Residues Cys-908, Cys-911, Cys-928, and Cys-931 each coordinate Zn(2+).

It belongs to the class-I aminoacyl-tRNA synthetase family. IleS type 1 subfamily. In terms of assembly, monomer. Requires Zn(2+) as cofactor.

The protein resides in the cytoplasm. The catalysed reaction is tRNA(Ile) + L-isoleucine + ATP = L-isoleucyl-tRNA(Ile) + AMP + diphosphate. Functionally, catalyzes the attachment of isoleucine to tRNA(Ile). As IleRS can inadvertently accommodate and process structurally similar amino acids such as valine, to avoid such errors it has two additional distinct tRNA(Ile)-dependent editing activities. One activity is designated as 'pretransfer' editing and involves the hydrolysis of activated Val-AMP. The other activity is designated 'posttransfer' editing and involves deacylation of mischarged Val-tRNA(Ile). This is Isoleucine--tRNA ligase from Paraburkholderia phytofirmans (strain DSM 17436 / LMG 22146 / PsJN) (Burkholderia phytofirmans).